We begin with the raw amino-acid sequence, 126 residues long: Methylglyoxal synthase (126 aa).

The region spanning 1-126 (MAERQKIALI…ADRLLPVITE (126 aa)) is the MGS-like domain. Residues histidine 12, lysine 16, 38 to 41 (TGTT), and 59 to 60 (SG) contribute to the substrate site. Residue aspartate 65 is the Proton donor/acceptor of the active site. Substrate is bound at residue histidine 92.

This sequence belongs to the methylglyoxal synthase family.

The catalysed reaction is dihydroxyacetone phosphate = methylglyoxal + phosphate. Functionally, catalyzes the formation of methylglyoxal from dihydroxyacetone phosphate. This is Methylglyoxal synthase from Allorhizobium ampelinum (strain ATCC BAA-846 / DSM 112012 / S4) (Agrobacterium vitis (strain S4)).